The following is a 162-amino-acid chain: MATAEIEEIPALLKPGQTVAGLDLGTKTIGLAVSDLGLSFAHPRPVIKRVKFTIDAQVLLKALETDKVGVIVIGLPMNMDGTAGPRVQATRAFVRTMQPLTDLPFVFWDERLSTVAAERALIGMDVSRGKRADRIDSAAAAFILQGALDRLHMMRRNDYDAG.

This sequence belongs to the YqgF nuclease family.

Its subcellular location is the cytoplasm. In terms of biological role, could be a nuclease involved in processing of the 5'-end of pre-16S rRNA. The polypeptide is Putative pre-16S rRNA nuclease (Brucella melitensis biotype 2 (strain ATCC 23457)).